A 281-amino-acid polypeptide reads, in one-letter code: 2-dehydro-3-deoxyphosphooctonate aldolase (281 aa).

It belongs to the KdsA family.

It is found in the cytoplasm. The enzyme catalyses D-arabinose 5-phosphate + phosphoenolpyruvate + H2O = 3-deoxy-alpha-D-manno-2-octulosonate-8-phosphate + phosphate. Its pathway is carbohydrate biosynthesis; 3-deoxy-D-manno-octulosonate biosynthesis; 3-deoxy-D-manno-octulosonate from D-ribulose 5-phosphate: step 2/3. It participates in bacterial outer membrane biogenesis; lipopolysaccharide biosynthesis. This chain is 2-dehydro-3-deoxyphosphooctonate aldolase, found in Hahella chejuensis (strain KCTC 2396).